Consider the following 69-residue polypeptide: Guanine nucleotide-binding protein G(I)/G(S)/G(O) subunit gamma-T2 (69 aa).

Residue C66 is modified to Cysteine methyl ester. Residue C66 is the site of S-farnesyl cysteine attachment. The propeptide at 67–69 is removed in mature form; it reads LIS.

Belongs to the G protein gamma family. In terms of assembly, g proteins are composed of 3 units, alpha, beta and gamma. In terms of tissue distribution, retinal cones.

The protein resides in the cell membrane. Guanine nucleotide-binding proteins (G proteins) are involved as a modulator or transducer in various transmembrane signaling systems. The beta and gamma chains are required for the GTPase activity, for replacement of GDP by GTP, and for G protein-effector interaction. This Homo sapiens (Human) protein is Guanine nucleotide-binding protein G(I)/G(S)/G(O) subunit gamma-T2 (GNGT2).